The chain runs to 160 residues: Nucleotide-binding protein VP1617 (160 aa).

This sequence belongs to the YajQ family.

Nucleotide-binding protein. In Vibrio parahaemolyticus serotype O3:K6 (strain RIMD 2210633), this protein is Nucleotide-binding protein VP1617.